Consider the following 424-residue polypeptide: UPF0415 protein C7orf25 homolog (424 aa).

It belongs to the UPF0415 family.

The polypeptide is UPF0415 protein C7orf25 homolog (Xenopus tropicalis (Western clawed frog)).